The primary structure comprises 400 residues: Signal recognition particle receptor FtsY (400 aa).

2 disordered regions span residues 12–37 (TKKTNQVEQDEPILDQQDQQDQQEEQ) and 51–86 (NKIKKTKTSETKKQEKPIETLKEKKKREKQKEKDKK). Residues 51 to 72 (NKIKKTKTSETKKQEKPIETLK) show a composition bias toward basic and acidic residues. GTP is bound by residues 192–199 (GVNGTGKT), 278–282 (DTAGR), and 342–345 (TKMD).

The protein belongs to the GTP-binding SRP family. FtsY subfamily. Part of the signal recognition particle protein translocation system, which is composed of SRP and FtsY.

The protein resides in the cell membrane. Its subcellular location is the cytoplasm. The enzyme catalyses GTP + H2O = GDP + phosphate + H(+). In terms of biological role, involved in targeting and insertion of nascent membrane proteins into the cytoplasmic membrane. Acts as a receptor for the complex formed by the signal recognition particle (SRP) and the ribosome-nascent chain (RNC). The polypeptide is Signal recognition particle receptor FtsY (Mycoplasma mycoides subsp. mycoides SC (strain CCUG 32753 / NCTC 10114 / PG1)).